We begin with the raw amino-acid sequence, 413 residues long: Phosphopentomutase (413 aa).

Residues aspartate 11, aspartate 306, histidine 311, aspartate 347, histidine 348, and histidine 359 each contribute to the Mn(2+) site.

This sequence belongs to the phosphopentomutase family. Mn(2+) is required as a cofactor.

Its subcellular location is the cytoplasm. The catalysed reaction is 2-deoxy-alpha-D-ribose 1-phosphate = 2-deoxy-D-ribose 5-phosphate. It catalyses the reaction alpha-D-ribose 1-phosphate = D-ribose 5-phosphate. It participates in carbohydrate degradation; 2-deoxy-D-ribose 1-phosphate degradation; D-glyceraldehyde 3-phosphate and acetaldehyde from 2-deoxy-alpha-D-ribose 1-phosphate: step 1/2. Its function is as follows. Isomerase that catalyzes the conversion of deoxy-ribose 1-phosphate (dRib-1-P) and ribose 1-phosphate (Rib-1-P) to deoxy-ribose 5-phosphate (dRib-5-P) and ribose 5-phosphate (Rib-5-P), respectively. The polypeptide is Phosphopentomutase (Helicobacter pylori (strain P12)).